Consider the following 168-residue polypeptide: S-ribosylhomocysteine lyase (168 aa).

Fe cation contacts are provided by H54, H58, and C128.

This sequence belongs to the LuxS family. In terms of assembly, homodimer. Fe cation serves as cofactor.

It catalyses the reaction S-(5-deoxy-D-ribos-5-yl)-L-homocysteine = (S)-4,5-dihydroxypentane-2,3-dione + L-homocysteine. In terms of biological role, involved in the synthesis of autoinducer 2 (AI-2) which is secreted by bacteria and is used to communicate both the cell density and the metabolic potential of the environment. The regulation of gene expression in response to changes in cell density is called quorum sensing. Catalyzes the transformation of S-ribosylhomocysteine (RHC) to homocysteine (HC) and 4,5-dihydroxy-2,3-pentadione (DPD). The chain is S-ribosylhomocysteine lyase from Neisseria meningitidis serogroup C / serotype 2a (strain ATCC 700532 / DSM 15464 / FAM18).